A 361-amino-acid chain; its full sequence is 3-dehydroquinate synthase (361 aa).

Residues Asn-41, 70–75 (DGEQYK), 104–108 (GVIGD), 128–129 (TT), Lys-141, Lys-150, 150–151 (KN), and 168–171 (CLTT) contribute to the NAD(+) site. 3 residues coordinate Zn(2+): Glu-183, His-246, and His-263.

This sequence belongs to the sugar phosphate cyclases superfamily. Dehydroquinate synthase family. NAD(+) is required as a cofactor. Requires Co(2+) as cofactor. The cofactor is Zn(2+).

It localises to the cytoplasm. It carries out the reaction 7-phospho-2-dehydro-3-deoxy-D-arabino-heptonate = 3-dehydroquinate + phosphate. Its pathway is metabolic intermediate biosynthesis; chorismate biosynthesis; chorismate from D-erythrose 4-phosphate and phosphoenolpyruvate: step 2/7. In terms of biological role, catalyzes the conversion of 3-deoxy-D-arabino-heptulosonate 7-phosphate (DAHP) to dehydroquinate (DHQ). In Vibrio cholerae serotype O1 (strain ATCC 39315 / El Tor Inaba N16961), this protein is 3-dehydroquinate synthase.